Here is a 365-residue protein sequence, read N- to C-terminus: GTPase Obg (365 aa).

The Obg domain maps to 1–159; sequence MKFIDEARIE…RMLKLELKVL (159 aa). The OBG-type G domain occupies 160–334; sequence ADVGLLGMPN…LVYAIKDHLA (175 aa). GTP is bound by residues 166–173, 191–195, 213–216, 284–287, and 315–317; these read GMPNAGKS, FTTLH, DIPG, NKLD, and SAL. The Mg(2+) site is built by serine 173 and threonine 193.

Belongs to the TRAFAC class OBG-HflX-like GTPase superfamily. OBG GTPase family. As to quaternary structure, monomer. Mg(2+) is required as a cofactor.

Its subcellular location is the cytoplasm. Its function is as follows. An essential GTPase which binds GTP, GDP and possibly (p)ppGpp with moderate affinity, with high nucleotide exchange rates and a fairly low GTP hydrolysis rate. Plays a role in control of the cell cycle, stress response, ribosome biogenesis and in those bacteria that undergo differentiation, in morphogenesis control. The chain is GTPase Obg from Cupriavidus metallidurans (strain ATCC 43123 / DSM 2839 / NBRC 102507 / CH34) (Ralstonia metallidurans).